We begin with the raw amino-acid sequence, 216 residues long: Transmembrane emp24 domain-containing protein eca (216 aa).

An N-terminal signal peptide occupies residues 1–20 (MRDQILSLALLLCVLHSACG). Over 21-182 (LYFHISETER…FRHTSESTNS (162 aa)) the chain is Lumenal. One can recognise a GOLD domain in the interval 30–126 (RKCFIEEVPD…QLRVHLDIQV (97 aa)). The stretch at 134 to 164 (ANVAQKEKLTELQLRIRQLLDQVEQITKEQN) forms a coiled coil. The helical transmembrane segment at 183-203 (RVLWWSLAQTVVLVCMGFWQM) threads the bilayer. At 204-216 (RHLKSFFEAKKLV) the chain is on the cytoplasmic side. Positions 213–216 (KKLV) match the Prevents secretion from ER motif.

This sequence belongs to the EMP24/GP25L family.

Its subcellular location is the endoplasmic reticulum membrane. Eca and bai are essential, though not redundant, for dorsoventral patterning of the embryo. Specifically required during early embryogenesis for the activity of maternal tkv, while the zygotic tkv is not affected. Involved in Golgi organization. In Drosophila ananassae (Fruit fly), this protein is Transmembrane emp24 domain-containing protein eca.